The following is a 417-amino-acid chain: MPEINNFTMNFGPQHPSAHGVLRLVLELDGEVIERADPHIGLLHRATEKLAENKTYLQNLPYMDRLDYVSMLCNEHAYCLAVEKLLGVEVPVRAQYIRTLFDEITRILNHLLWLGAYALDVGAMSVFLYCFREREDLMDVYEAVSGARMHAAYYRPGGVYRDLPAQMPQYQPSPYRDARRLQELNANRQGSMLDFIEDFARRFPTYVDEYETLLTDNRIWKQRTVGIGVVGPERAIQLGFTGPMLRSSGVAWDLRRTQPYAAYADLDFDIPVGKTGDCYDRYLVRVAEMRQSNRIIVQCVDWLRKNPGPVITDDFKIAAPSREEMKTSMEALIHHFKLFSEGMAVPAGEVYAAVEAPKGEFGIYMISDGANKPYRMKIRAPGFPHLAAMDEMARGHMIADVVAILSTMDIVFGEIDR.

This sequence belongs to the complex I 49 kDa subunit family. NDH-1 is composed of 14 different subunits. Subunits NuoB, C, D, E, F, and G constitute the peripheral sector of the complex.

The protein localises to the cell inner membrane. It carries out the reaction a quinone + NADH + 5 H(+)(in) = a quinol + NAD(+) + 4 H(+)(out). Functionally, NDH-1 shuttles electrons from NADH, via FMN and iron-sulfur (Fe-S) centers, to quinones in the respiratory chain. The immediate electron acceptor for the enzyme in this species is believed to be ubiquinone. Couples the redox reaction to proton translocation (for every two electrons transferred, four hydrogen ions are translocated across the cytoplasmic membrane), and thus conserves the redox energy in a proton gradient. The polypeptide is NADH-quinone oxidoreductase subunit D (Acidithiobacillus ferrooxidans (strain ATCC 53993 / BNL-5-31) (Leptospirillum ferrooxidans (ATCC 53993))).